The chain runs to 477 residues: Salivary plasminogen activator alpha 2 (477 aa).

Positions Met1–Arg36 are cleaved as a signal peptide. The Fibronectin type-I domain maps to Val40–Val82. Intrachain disulfides connect Cys42-Cys72, Cys70-Cys79, Cys87-Cys98, Cys92-Cys109, Cys111-Cys120, Cys128-Cys209, Cys149-Cys191, Cys180-Cys204, Cys214-Cys345, Cys257-Cys273, Cys265-Cys334, Cys359-Cys434, Cys391-Cys407, and Cys424-Cys452. In terms of domain architecture, EGF-like spans Pro83–Glu121. Positions Cys128–Cys209 constitute a Kringle domain. N-linked (GlcNAc...) asparagine glycosylation is present at Asn185. One can recognise a Peptidase S1 domain in the interval Ser226–Arg476. Catalysis depends on charge relay system residues His272 and Asp321. A glycan (N-linked (GlcNAc...) asparagine) is linked at Asn398. Ser428 (charge relay system) is an active-site residue.

Belongs to the peptidase S1 family. As to quaternary structure, monomer.

It is found in the secreted. The enzyme catalyses Specific cleavage of Arg-|-Val bond in plasminogen to form plasmin.. With respect to regulation, activity toward plasminogen is stimulated in the presence of fibrin I. Its function is as follows. Probably essential to support the feeding habits of this exclusively haematophagous animal. Probable potent thrombolytic agent. The sequence is that of Salivary plasminogen activator alpha 2 from Desmodus rotundus (Vampire bat).